The following is a 247-amino-acid chain: Small ribosomal subunit protein uS3 (247 aa).

A KH type-2 domain is found at 18-87 (IDEYLAKRFY…NPQITVRRVE (70 aa)). Residues 226-247 (QQGEVVGEAPNTPLEEQGQKQG) are disordered.

The protein belongs to the universal ribosomal protein uS3 family. Part of the 30S ribosomal subunit.

Functionally, binds the lower part of the 30S subunit head. The protein is Small ribosomal subunit protein uS3 of Hyperthermus butylicus (strain DSM 5456 / JCM 9403 / PLM1-5).